A 271-amino-acid chain; its full sequence is Ribosomal RNA small subunit methyltransferase A (271 aa).

Residues N28, L30, G54, E75, D99, and N117 each contribute to the S-adenosyl-L-methionine site.

It belongs to the class I-like SAM-binding methyltransferase superfamily. rRNA adenine N(6)-methyltransferase family. RsmA subfamily.

It is found in the cytoplasm. It carries out the reaction adenosine(1518)/adenosine(1519) in 16S rRNA + 4 S-adenosyl-L-methionine = N(6)-dimethyladenosine(1518)/N(6)-dimethyladenosine(1519) in 16S rRNA + 4 S-adenosyl-L-homocysteine + 4 H(+). Specifically dimethylates two adjacent adenosines (A1518 and A1519) in the loop of a conserved hairpin near the 3'-end of 16S rRNA in the 30S particle. May play a critical role in biogenesis of 30S subunits. In Thermus thermophilus (strain ATCC BAA-163 / DSM 7039 / HB27), this protein is Ribosomal RNA small subunit methyltransferase A.